We begin with the raw amino-acid sequence, 138 residues long: Basic phospholipase A2 homolog Ts-K49b (138 aa).

A signal peptide spans 1–16; sequence MRTLWIMAVLLVGVEG. 6 cysteine pairs are disulfide-bonded: C42/C131, C44/C60, C65/C138, C66/C104, C73/C97, and C91/C102. The important for membrane-damaging activities in eukaryotes and bacteria; heparin-binding stretch occupies residues 121-133; the sequence is KKKKINLKLFCKK.

As to expression, expressed by the venom gland.

Its subcellular location is the secreted. Snake venom phospholipase A2 homolog that lacks catalytic activity. It shows myotoxic and weak anticoagulant activities. A model of myotoxic mechanism has been proposed: an apo Lys49-PLA2 is activated by the entrance of a hydrophobic molecule (e.g. fatty acid) at the hydrophobic channel of the protein leading to a reorientation of a monomer. This reorientation causes a transition between 'inactive' to 'active' states, causing alignment of C-terminal and membrane-docking sites (MDoS) side-by-side and putting the membrane-disruption sites (MDiS) in the same plane, exposed to solvent and in a symmetric position for both monomers. The MDoS region stabilizes the toxin on membrane by the interaction of charged residues with phospholipid head groups. Subsequently, the MDiS region destabilizes the membrane with penetration of hydrophobic residues. This insertion causes a disorganization of the membrane, allowing an uncontrolled influx of ions (i.e. calcium and sodium), and eventually triggering irreversible intracellular alterations and cell death. The protein is Basic phospholipase A2 homolog Ts-K49b of Trimeresurus stejnegeri (Chinese green tree viper).